We begin with the raw amino-acid sequence, 309 residues long: Taste receptor type 2 member 113 (309 aa).

Over M1–T8 the chain is Extracellular. A helical transmembrane segment spans residues F9–L29. At M30 to R55 the chain is on the cytoplasmic side. Residues I56–H76 form a helical membrane-spanning segment. The Extracellular segment spans residues E77–A101. A helical membrane pass occupies residues S102–L122. The Cytoplasmic portion of the chain corresponds to K123–K127. The chain crosses the membrane as a helical span at residues N128–V148. The Extracellular portion of the chain corresponds to N149–M185. The N-linked (GlcNAc...) asparagine glycan is linked to N162. A helical membrane pass occupies residues F186–W206. Topologically, residues R207 to R229 are cytoplasmic. Residues A230–V250 traverse the membrane as a helical segment. Over K251–L262 the chain is Extracellular. Residues I263 to I283 traverse the membrane as a helical segment. Residues W284–V309 are Cytoplasmic-facing.

The protein belongs to the G-protein coupled receptor T2R family.

Its subcellular location is the membrane. Functionally, putative taste receptor which may play a role in the perception of bitterness. This chain is Taste receptor type 2 member 113, found in Rattus norvegicus (Rat).